Reading from the N-terminus, the 401-residue chain is Phosphoglycerate kinase (401 aa).

Substrate is bound by residues 24–26 (DFN), Arg-40, 63–66 (HFGR), Arg-122, and Arg-155. ATP contacts are provided by residues Lys-206, Gly-297, Glu-328, and 357-360 (GGDS).

This sequence belongs to the phosphoglycerate kinase family. In terms of assembly, monomer.

The protein resides in the cytoplasm. It catalyses the reaction (2R)-3-phosphoglycerate + ATP = (2R)-3-phospho-glyceroyl phosphate + ADP. It participates in carbohydrate degradation; glycolysis; pyruvate from D-glyceraldehyde 3-phosphate: step 2/5. This is Phosphoglycerate kinase from Gloeothece citriformis (strain PCC 7424) (Cyanothece sp. (strain PCC 7424)).